Reading from the N-terminus, the 451-residue chain is UDP-N-acetylmuramoylalanine--D-glutamate ligase (451 aa).

Residue 119-125 (GSNGKTT) participates in ATP binding.

It belongs to the MurCDEF family.

Its subcellular location is the cytoplasm. The catalysed reaction is UDP-N-acetyl-alpha-D-muramoyl-L-alanine + D-glutamate + ATP = UDP-N-acetyl-alpha-D-muramoyl-L-alanyl-D-glutamate + ADP + phosphate + H(+). The protein operates within cell wall biogenesis; peptidoglycan biosynthesis. Its function is as follows. Cell wall formation. Catalyzes the addition of glutamate to the nucleotide precursor UDP-N-acetylmuramoyl-L-alanine (UMA). In Geobacillus sp. (strain WCH70), this protein is UDP-N-acetylmuramoylalanine--D-glutamate ligase.